The following is a 306-amino-acid chain: D-alanine--D-alanine ligase (306 aa).

In terms of domain architecture, ATP-grasp spans 107 to 303; that stretch reads KHLFKSAGLS…FEQLVVRILE (197 aa). 134 to 189 serves as a coordination point for ATP; the sequence is IMQQFKKVMVKPSHEGSSIGMAQASTPQELEDALSNAFKFDSQVLVEQWISGREFT. Positions 257, 270, and 272 each coordinate Mg(2+).

This sequence belongs to the D-alanine--D-alanine ligase family. Mg(2+) is required as a cofactor. The cofactor is Mn(2+).

The protein localises to the cytoplasm. It catalyses the reaction 2 D-alanine + ATP = D-alanyl-D-alanine + ADP + phosphate + H(+). It functions in the pathway cell wall biogenesis; peptidoglycan biosynthesis. Its function is as follows. Cell wall formation. This Pseudoalteromonas translucida (strain TAC 125) protein is D-alanine--D-alanine ligase.